The sequence spans 144 residues: Heme transporter hrg1-B (144 aa).

The next 4 membrane-spanning stretches (helical) occupy residues 6–26 (IYIS…AFIV), 38–58 (AMGG…IMYI), 71–91 (FFMF…ATFI), and 107–127 (FYLS…LGLY). A Di-leucine motif motif is present at residues 140–141 (IL).

This sequence belongs to the HRG family.

The protein resides in the endosome membrane. It is found in the lysosome membrane. Its subcellular location is the cytoplasmic vesicle. It localises to the phagosome membrane. The enzyme catalyses heme b(in) = heme b(out). In terms of biological role, heme transporter that regulates intracellular heme availability through the endosomal or lysosomal compartment. In macrophages, is the heme transporter for heme-iron recycling. Essential for macrophage iron homeostasis, transports heme from the phagolysosome to the cytoplasm during erythrophagocytosis (EP). This chain is Heme transporter hrg1-B (slc48a1a), found in Danio rerio (Zebrafish).